The following is a 190-amino-acid chain: MSQLRPAVFLVLLLTLITGLLYPLLTTTLAQWMFPQQANGSLLLEQGSVRGSAPIGQSFSRADYFQGRPSATSDRPYNPLASSGSNLAGSNPALDQAVSQRVAALRAANPQAGQQVPVDLVTASASGLDPQISPQAAYWQADRIAAARRLPREVVKRLIDENTTTPMPAFLGEPAVNVLALNLALDALQR.

The chain crosses the membrane as a helical span at residues 6–26 (PAVFLVLLLTLITGLLYPLLT). The disordered stretch occupies residues 67 to 88 (GRPSATSDRPYNPLASSGSNLA). Polar residues predominate over residues 69–88 (PSATSDRPYNPLASSGSNLA).

This sequence belongs to the KdpC family. In terms of assembly, the system is composed of three essential subunits: KdpA, KdpB and KdpC.

The protein resides in the cell inner membrane. Its function is as follows. Part of the high-affinity ATP-driven potassium transport (or Kdp) system, which catalyzes the hydrolysis of ATP coupled with the electrogenic transport of potassium into the cytoplasm. This subunit acts as a catalytic chaperone that increases the ATP-binding affinity of the ATP-hydrolyzing subunit KdpB by the formation of a transient KdpB/KdpC/ATP ternary complex. This chain is Potassium-transporting ATPase KdpC subunit, found in Erwinia tasmaniensis (strain DSM 17950 / CFBP 7177 / CIP 109463 / NCPPB 4357 / Et1/99).